The following is a 69-amino-acid chain: MLKMGVLLFIFLVLFPLTTLELDTDRPVERHAAIKQDLKPQERRGIRLHAPRDECCEPQWCDGACDCCS.

An N-terminal signal peptide occupies residues 1 to 20 (MLKMGVLLFIFLVLFPLTTL). The propeptide occupies 21–54 (ELDTDRPVERHAAIKQDLKPQERRGIRLHAPRDE). Disulfide bonds link cysteine 55–cysteine 67, cysteine 56–cysteine 65, and cysteine 61–cysteine 68.

It belongs to the conotoxin M superfamily. In terms of tissue distribution, expressed by the venom duct.

It is found in the secreted. This chain is Conotoxin Lp3.1, found in Conus leopardus (Leopard cone).